A 283-amino-acid polypeptide reads, in one-letter code: Nopaline-binding periplasmic protein (283 aa).

The signal sequence occupies residues 1 to 25 (MKFFNLNALAAVVTGVLLAAGPTQA). A disulfide bridge links Cys63 with Cys70.

This sequence belongs to the bacterial solute-binding protein 3 family.

The protein localises to the periplasm. Functionally, component of the nopaline active transport system probably consisting of four subunits: Q, M, P and T. This system is also capable of transporting octopine provided that catabolic functions are induced with nopaline. In Agrobacterium fabrum (strain C58 / ATCC 33970) (Agrobacterium tumefaciens (strain C58)), this protein is Nopaline-binding periplasmic protein (nocT).